Consider the following 234-residue polypeptide: Sugar fermentation stimulation protein A (234 aa).

Residues 201–220 (LLSEAQQRGVEILAYKAEIS) constitute a DNA-binding region (H-T-H motif).

Belongs to the SfsA family.

Functionally, binds to DNA non-specifically. Could be a regulatory factor involved in maltose metabolism. The protein is Sugar fermentation stimulation protein A of Shigella boydii serotype 4 (strain Sb227).